A 1288-amino-acid chain; its full sequence is CLIP-associating protein 2 (1288 aa).

The tract at residues 1-62 (MALSLSQDRS…AAKSGASKEG (62 aa)) is disordered. Composition is skewed to low complexity over residues 19–32 (GSRP…FKVP) and 40–62 (ESAS…SKEG). Residues 62-312 (GAGAVDEEDF…RTLQSCLKSS (251 aa)) are TOG 1. 3 HEAT repeats span residues 174-209 (HGAE…IRHT), 210-246 (HVPR…EWQT), and 251-288 (RHAA…HFPG). 2 disordered regions span residues 314-571 (SVAS…SSRL) and 614-634 (ANSD…NGSI). 2 stretches are compositionally biased toward low complexity: residues 317–337 (SLPQ…RPLS) and 347–358 (PAGSKSSGSPAS). Composition is skewed to polar residues over residues 406–421 (KQTL…SQVD) and 468–478 (TALSTLSTGAQ). Residues 490–493 (SRIP) carry the SXIP motif 1 motif. Residues 496-518 (QGCSRDSSPTRLSVAPSNISHIY) are compositionally biased toward polar residues. The SXIP motif 2 signature appears at 527–530 (SRIP). Over residues 616–630 (SDASSACSERSYSSR) the composition is skewed to low complexity. Positions 638–889 (MRQTEDVAEV…TKLLQNHLRN (252 aa)) are TOG 2. HEAT repeat units follow at residues 718–755 (RVFS…KMGA) and 780–817 (LQFT…QMEP). Positions 891–900 (GNTAQASIGS) are enriched in polar residues. 2 disordered regions span residues 891-936 (GNTA…FDYD) and 960-1047 (SVRS…DSGV). Over residues 912-931 (SWSSPLTSPTNTSQNTPSPS) the composition is skewed to low complexity. Positions 963 to 977 (SQEDMTEPPRKREGD) are enriched in basic and acidic residues. The span at 1019 to 1030 (SDSSFGSSSFNK) shows a compositional bias: low complexity. Acidic residues predominate over residues 1036–1046 (DQEESLTDDSG). 4 HEAT repeats span residues 1047 to 1086 (VDQS…ETQL), 1091 to 1128 (EHFK…RQPW), 1167 to 1204 (ISPD…RLPK), and 1209 to 1246 (QMLP…VIGE).

The protein belongs to the CLASP family. In terms of assembly, interacts with microtubules.

The protein localises to the cytoplasm. The protein resides in the cytoskeleton. It is found in the microtubule organizing center. It localises to the centrosome. Its subcellular location is the chromosome. The protein localises to the centromere. The protein resides in the kinetochore. It is found in the spindle. It localises to the golgi apparatus. Its subcellular location is the trans-Golgi network. The protein localises to the cell membrane. The protein resides in the cell projection. It is found in the ruffle membrane. In terms of biological role, microtubule plus-end tracking protein that promotes the stabilization of dynamic microtubules. Involved in the nucleation of noncentrosomal microtubules originating from the trans-Golgi network (TGN). Required for the polarization of the cytoplasmic microtubule arrays in migrating cells towards the leading edge of the cell. May act at the cell cortex to enhance the frequency of rescue of depolymerizing microtubules. This cortical microtubule stabilizing activity is regulated at least in part by phosphatidylinositol 3-kinase signaling. Also performs a similar stabilizing function at the kinetochore which is essential for the bipolar alignment of chromosomes on the mitotic spindle. The chain is CLIP-associating protein 2 (clasp2) from Danio rerio (Zebrafish).